Consider the following 245-residue polypeptide: tRNA pseudouridine synthase A (245 aa).

D52 acts as the Nucleophile in catalysis. Y111 serves as a coordination point for substrate.

This sequence belongs to the tRNA pseudouridine synthase TruA family. As to quaternary structure, homodimer.

It carries out the reaction uridine(38/39/40) in tRNA = pseudouridine(38/39/40) in tRNA. In terms of biological role, formation of pseudouridine at positions 38, 39 and 40 in the anticodon stem and loop of transfer RNAs. This is tRNA pseudouridine synthase A from Rickettsia akari (strain Hartford).